A 151-amino-acid polypeptide reads, in one-letter code: MD-2-related lipid-recognition protein (151 aa).

An N-terminal signal peptide occupies residues Met-1 to Ala-18. Cystine bridges form between Cys-27-Cys-141, Cys-45-Cys-51, and Cys-95-Cys-100. Asn-58 carries an N-linked (GlcNAc...) asparagine glycan.

Post-translationally, N-glycosylated. Hemolymph (at protein level). Constitutively expressed mainly in fat body and also in hemocytes and secreted into hemolymph. Not detected in midgut, epidermis, or Malpighian tubule of naive larvae.

The protein resides in the secreted. In terms of biological role, binds to lipopolysaccharide from a variety of Gram-negative bacteria and to lipid A. The protein is MD-2-related lipid-recognition protein of Manduca sexta (Tobacco hawkmoth).